We begin with the raw amino-acid sequence, 127 residues long: Anti-adapter protein IraD (127 aa).

This sequence belongs to the GpW/Gp25 family. IraD subfamily. In terms of assembly, interacts with RssB.

The protein resides in the cytoplasm. Functionally, inhibits RpoS proteolysis by regulating RssB activity, thereby increasing the stability of the sigma stress factor RpoS during oxidative stress. Its effect on RpoS stability is due to its interaction with RssB, which probably blocks the interaction of RssB with RpoS, and the consequent delivery of the RssB-RpoS complex to the ClpXP protein degradation pathway. This chain is Anti-adapter protein IraD, found in Escherichia coli O6:K15:H31 (strain 536 / UPEC).